A 656-amino-acid chain; its full sequence is DNA ligase (656 aa).

Residues 32–36 and 81–82 each bind NAD(+); these read DAVYD and SL. Catalysis depends on K112, which acts as the N6-AMP-lysine intermediate. NAD(+) contacts are provided by R133, E167, and K306. Zn(2+) is bound by residues C400, C403, C416, and C421. Residues 577–656 form the BRCT domain; that stretch reads ESSSVFSNKT…ELLKRLKEFD (80 aa).

It belongs to the NAD-dependent DNA ligase family. LigA subfamily. The cofactor is Mg(2+). Mn(2+) serves as cofactor.

It catalyses the reaction NAD(+) + (deoxyribonucleotide)n-3'-hydroxyl + 5'-phospho-(deoxyribonucleotide)m = (deoxyribonucleotide)n+m + AMP + beta-nicotinamide D-nucleotide.. In terms of biological role, DNA ligase that catalyzes the formation of phosphodiester linkages between 5'-phosphoryl and 3'-hydroxyl groups in double-stranded DNA using NAD as a coenzyme and as the energy source for the reaction. It is essential for DNA replication and repair of damaged DNA. The polypeptide is DNA ligase (Helicobacter pylori (strain Shi470)).